Consider the following 111-residue polypeptide: Probable 4-amino-4-deoxy-L-arabinose-phosphoundecaprenol flippase subunit ArnE (111 aa).

Helical transmembrane passes span 38 to 58 (LWLG…LLVL), 61 to 81 (LPVG…TLAA), and 91 to 111 (PRHW…GSAA). In terms of domain architecture, EamA spans 40-109 (LGLALICMGA…IISGIIILGS (70 aa)).

It belongs to the ArnE family. As to quaternary structure, heterodimer of ArnE and ArnF.

The protein resides in the cell inner membrane. It functions in the pathway bacterial outer membrane biogenesis; lipopolysaccharide biosynthesis. Functionally, translocates 4-amino-4-deoxy-L-arabinose-phosphoundecaprenol (alpha-L-Ara4N-phosphoundecaprenol) from the cytoplasmic to the periplasmic side of the inner membrane. This Salmonella choleraesuis (strain SC-B67) protein is Probable 4-amino-4-deoxy-L-arabinose-phosphoundecaprenol flippase subunit ArnE.